The chain runs to 227 residues: MTAAAVLAGHEGPAAAVSVPLLVKRLGRVDYAPAWEAMQHFTASRGEDTADEIWLLEHPPVYTLGQAGRPEHLLRNDAGIPLVKIDRGGQITYHGPGQLVAYLLLDLRRRHLKVRELVALMEQAVIDCLAEYGLHAERKDGAPGVYIDGAKIAALGLRVRNGCSYHGLALNVDADLAPFGWINPCGYEGLQTIRLKDFGVGDDVAAVGERLLQHLLRLLPPGVVPSR.

The region spanning Glu47–Val223 is the BPL/LPL catalytic domain. Substrate contacts are provided by residues Arg87–His94, Ala154–Gly156, and Gly167–Ala169. The active-site Acyl-thioester intermediate is the Cys185.

Belongs to the LipB family.

The protein resides in the cytoplasm. It carries out the reaction octanoyl-[ACP] + L-lysyl-[protein] = N(6)-octanoyl-L-lysyl-[protein] + holo-[ACP] + H(+). It functions in the pathway protein modification; protein lipoylation via endogenous pathway; protein N(6)-(lipoyl)lysine from octanoyl-[acyl-carrier-protein]: step 1/2. Its function is as follows. Catalyzes the transfer of endogenously produced octanoic acid from octanoyl-acyl-carrier-protein onto the lipoyl domains of lipoate-dependent enzymes. Lipoyl-ACP can also act as a substrate although octanoyl-ACP is likely to be the physiological substrate. The protein is Octanoyltransferase of Azoarcus sp. (strain BH72).